A 689-amino-acid polypeptide reads, in one-letter code: Protein asunder (689 aa).

Residues 521-550 adopt a coiled-coil conformation; sequence NGARLKLSKAKDQYRLLYRELEQLIQLNAT. Positions 578–619 are disordered; it reads GASLLRSYTESPLSPERLEPITSGSASGSSNSNSLLKASKRR. A compositionally biased stretch (low complexity) spans 600-614; sequence SGSASGSSNSNSLLK. Residues 613-619 carry the Nuclear localization signal (NLS) motif; sequence LKASKRR.

This sequence belongs to the Integrator subunit 13 family. Belongs to the multiprotein complex Integrator, at least composed of IntS1, IntS2, IntS3, IntS4, omd/IntS5, IntS6, defl/IntS7, IntS8, IntS9, IntS10, IntS11, IntS12, asun/IntS13, IntS14 and IntS15. The core complex associates with protein phosphatase 2A subunits mts/PP2A and Pp2A-29B, to form the Integrator-PP2A (INTAC) complex. In terms of processing, phosphorylated.

It localises to the nucleus. Its subcellular location is the cytoplasm. It is found in the perinuclear region. Component of the integrator complex, a multiprotein complex that terminates RNA polymerase II (Pol II) transcription in the promoter-proximal region of genes. The integrator complex provides a quality checkpoint during transcription elongation by driving premature transcription termination of transcripts that are unfavorably configured for transcriptional elongation: the complex terminates transcription by (1) catalyzing dephosphorylation of the C-terminal domain (CTD) of Pol II subunit Polr2A/Rbp1 and Spt5, and (2) degrading the exiting nascent RNA transcript via endonuclease activity. The integrator complex is also involved in the 3'-end processing of the U7 snRNA, and also the spliceosomal snRNAs U1, U2, U4 and U5. In Drosophila erecta (Fruit fly), this protein is Protein asunder (asun).